A 429-amino-acid chain; its full sequence is ATP-dependent Clp protease ATP-binding subunit ClpX (429 aa).

The 54-residue stretch at Met1 to Ala54 folds into the ClpX-type ZB domain. Cys12, Cys15, Cys35, and Cys38 together coordinate Zn(2+). Pro119–Leu126 contributes to the ATP binding site.

Belongs to the ClpX chaperone family. Component of the ClpX-ClpP complex. Forms a hexameric ring that, in the presence of ATP, binds to fourteen ClpP subunits assembled into a disk-like structure with a central cavity, resembling the structure of eukaryotic proteasomes.

ATP-dependent specificity component of the Clp protease. It directs the protease to specific substrates. Can perform chaperone functions in the absence of ClpP. The chain is ATP-dependent Clp protease ATP-binding subunit ClpX from Borrelia duttonii (strain Ly).